The primary structure comprises 396 residues: NADH-quinone oxidoreductase subunit D (396 aa).

It belongs to the complex I 49 kDa subunit family. NDH-1 is composed of 14 different subunits. Subunits NuoB, C, D, E, F, and G constitute the peripheral sector of the complex.

It is found in the cell inner membrane. The catalysed reaction is a quinone + NADH + 5 H(+)(in) = a quinol + NAD(+) + 4 H(+)(out). Functionally, NDH-1 shuttles electrons from NADH, via FMN and iron-sulfur (Fe-S) centers, to quinones in the respiratory chain. The immediate electron acceptor for the enzyme in this species is believed to be ubiquinone. Couples the redox reaction to proton translocation (for every two electrons transferred, four hydrogen ions are translocated across the cytoplasmic membrane), and thus conserves the redox energy in a proton gradient. The chain is NADH-quinone oxidoreductase subunit D from Rhodopseudomonas palustris (strain BisA53).